The primary structure comprises 320 residues: MACLRPLQVHNLKKGEKVNFKHYSNGDVARYDMNKNYIVNDSVPCRKCVGCRLDNSAEWGVRASLEIKSNPKHNWFVTLTYSDEHLVYNALGRPNCVPEHITKFIKSLRKYFERRGHIGIKYLASNEYGTKRMRPHYHICFFNLPLDDLEKTIDSQKGYQQWTSKTISRFWDKGFHTIGELTYHSANYTARYTTKKLGVKDYKALQLVPEKLRMSKGIGLKYFMENKERIYKEDSVLISTDKGIKRFKVPKYFDRRMEREWQDEFYLDYIKEKREKVAKRTLFQRQIVSSRSYTDYLGDEQKKLNNIVKRLTRPLKTGKK.

Residues Tyr188 and Tyr192 each act as O-(5'-phospho-DNA)-tyrosine intermediate in the active site.

Belongs to the microviridae Rep protein family.

It catalyses the reaction ATP + (deoxyribonucleotide)n-3'-hydroxyl + 5'-phospho-(deoxyribonucleotide)m = (deoxyribonucleotide)n+m + AMP + diphosphate.. Its function is as follows. Plays an essential role in viral DNA replication. Binds the origin of replication and cleaves the dsDNA replicative form I (RFI) and becomes covalently bound to it via phosphotyrosine bond, generating the dsDNA replicative form II (RFII). In turn, viral DNA replication initiates at the 3'-OH of the cleavage site. After one round of rolling circle synthesis, protein ORF2 is linked to the newly synthesized ssDNA and joins the ends of the displaced strand to generate a circular single-stranded molecule ready to be packed into a virion. This Spiroplasma virus 4 (SpV4) protein is Replication-associated protein ORF2.